Here is a 586-residue protein sequence, read N- to C-terminus: Proteasome-associated ATPase (586 aa).

Residues 11–76 (AWRELEAVRA…LREEVDRLGQ (66 aa)) adopt a coiled-coil conformation. 273–278 (GCGKTL) provides a ligand contact to ATP. The docks into pockets in the proteasome alpha-ring stretch occupies residues 585 to 586 (YL).

Belongs to the AAA ATPase family. In terms of assembly, homohexamer. Assembles into a hexameric ring structure that caps the 20S proteasome core. Strongly interacts with the prokaryotic ubiquitin-like protein Pup through a hydrophobic interface; the interacting region of ARC lies in its N-terminal coiled-coil domain. There is one Pup binding site per ARC hexamer ring. Upon ATP-binding, the C-terminus of ARC interacts with the alpha-rings of the proteasome core, possibly by binding to the intersubunit pockets.

Its pathway is protein degradation; proteasomal Pup-dependent pathway. ATPase which is responsible for recognizing, binding, unfolding and translocation of pupylated proteins into the bacterial 20S proteasome core particle. May be essential for opening the gate of the 20S proteasome via an interaction with its C-terminus, thereby allowing substrate entry and access to the site of proteolysis. Thus, the C-termini of the proteasomal ATPase may function like a 'key in a lock' to induce gate opening and therefore regulate proteolysis. This Nocardia farcinica (strain IFM 10152) protein is Proteasome-associated ATPase.